Reading from the N-terminus, the 321-residue chain is CPX chromosomal region candidate gene 1 protein homolog (321 aa).

Residues 1–83 (MSSPTKEGSD…TEIQKDQREE (83 aa)) are disordered. Composition is skewed to polar residues over residues 21–32 (NEPSNDCTTDIE) and 44–60 (VETN…TSQE).

The polypeptide is CPX chromosomal region candidate gene 1 protein homolog (CPXCR1) (Macaca fascicularis (Crab-eating macaque)).